A 400-amino-acid chain; its full sequence is Probable splicing factor YJU2B (400 aa).

The tract at residues 1 to 26 (MGERKGVNKYYPPDFNPEKHGSLNRY) is disordered. The residue at position 40 (serine 40) is a Phosphoserine. The stretch at 182–214 (LNSMLRKRFREKKKAMQEEEERDQALQAKASLA) forms a coiled coil. The segment at 255-400 (WFPSTPGASA…VADYSGSESE (146 aa)) is disordered. Over residues 283–292 (RRATPTSSPV) the composition is skewed to polar residues. Residue serine 310 is modified to Phosphoserine. Polar residues predominate over residues 327 to 341 (EGTNQNRPVSPQDCS). Over residues 364–380 (PQPPPDTSPEAPNPQDT) the composition is skewed to pro residues.

Belongs to the CWC16 family.

The protein resides in the nucleus. Its function is as follows. May be involved in mRNA splicing. The polypeptide is Probable splicing factor YJU2B (YJU2B) (Bos taurus (Bovine)).